A 165-amino-acid polypeptide reads, in one-letter code: Protein AIG2 C (165 aa).

Position 14–19 (14–19 (YGSILE)) interacts with substrate. The Proton acceptor role is filled by glutamate 82.

This sequence belongs to the gamma-glutamylcyclotransferase family. As to expression, expressed in floral organs, leaves, stems and roots.

Functionally, putative gamma-glutamylcyclotransferase. This chain is Protein AIG2 C, found in Arabidopsis thaliana (Mouse-ear cress).